The following is a 331-amino-acid chain: Ferrochelatase (331 aa).

Fe cation-binding residues include His-187 and Glu-286.

Belongs to the ferrochelatase family.

The protein resides in the cytoplasm. It carries out the reaction heme b + 2 H(+) = protoporphyrin IX + Fe(2+). The protein operates within porphyrin-containing compound metabolism; protoheme biosynthesis; protoheme from protoporphyrin-IX: step 1/1. Its function is as follows. Catalyzes the ferrous insertion into protoporphyrin IX. This chain is Ferrochelatase, found in Legionella pneumophila (strain Corby).